The following is a 420-amino-acid chain: Histidine--tRNA ligase (420 aa).

It belongs to the class-II aminoacyl-tRNA synthetase family. Homodimer.

The protein resides in the cytoplasm. The catalysed reaction is tRNA(His) + L-histidine + ATP = L-histidyl-tRNA(His) + AMP + diphosphate + H(+). The sequence is that of Histidine--tRNA ligase from Nitrosomonas europaea (strain ATCC 19718 / CIP 103999 / KCTC 2705 / NBRC 14298).